A 932-amino-acid polypeptide reads, in one-letter code: Protocadherin gamma-A2 (932 aa).

An N-terminal signal peptide occupies residues 1–28 (MAALQKLPHCRKLFLLCFLLATLWEARA). Cadherin domains are found at residues 29-133 (GQIR…APRF), 134-242 (GVEE…APVF), 243-347 (TQPE…APEF), 348-452 (YMTS…APAF), 453-562 (SRTS…PPEI), and 570-682 (DGST…EPSA). Over 29-692 (GQIRYSVREE…KPNDSDLTLY (664 aa)) the chain is Extracellular. Residues asparagine 419 and asparagine 545 are each glycosylated (N-linked (GlcNAc...) asparagine). Residue asparagine 685 is glycosylated (N-linked (GlcNAc...) asparagine). A helical transmembrane segment spans residues 693–713 (LVVAVAAVSCVFLAFVIVLLA). The Cytoplasmic segment spans residues 714–932 (HRLRRWHKSR…KKKSGKKEKK (219 aa)). Disordered stretches follow at residues 798-841 (LEEE…WPNN) and 902-932 (ATLT…KEKK). Residues 806-841 (FSQQAPPNTDWRFSQAQRPGTSGSQNGDDTGTWPNN) are compositionally biased toward polar residues. Residues 922 to 932 (NKKKSGKKEKK) show a composition bias toward basic residues.

It localises to the cell membrane. In terms of biological role, potential calcium-dependent cell-adhesion protein. May be involved in the establishment and maintenance of specific neuronal connections in the brain. The sequence is that of Protocadherin gamma-A2 (PCDHGA2) from Pan troglodytes (Chimpanzee).